The primary structure comprises 567 residues: Hexose transporter HXT9 (567 aa).

Polar residues predominate over residues 1–16 (MSGVNNTSANDLSTTE). The interval 1-45 (MSGVNNTSANDLSTTESNSNSVANAPSVKTEHNDSKNSLNLDATE) is disordered. The Cytoplasmic segment spans residues 1 to 56 (MSGVNNTSANDLSTTESNSNSVANAPSVKTEHNDSKNSLNLDATEPPIDLPQKPLS). A compositionally biased stretch (low complexity) spans 17 to 28 (SNSNSVANAPSV). The chain crosses the membrane as a helical span at residues 57–77 (AYTTVAILCLMIAFGGFIFGW). Over 78–112 (DTGTISGFVNLSDFIRRFGQKNDKGTYYLSKVRMG) the chain is Extracellular. The N-linked (GlcNAc...) asparagine glycan is linked to N87. The helical transmembrane segment at 113 to 133 (LIVSIFNIGCAIGGIVLSKVG) threads the bilayer. The Cytoplasmic portion of the chain corresponds to 134-139 (DIYGRR). The chain crosses the membrane as a helical span at residues 140–160 (IGLITVTAIYVVGILIQITSI). Over 161-170 (NKWYQYFIGR) the chain is Extracellular. The helical transmembrane segment at 171–191 (IISGLGVGGIAVLSPMLISEV) threads the bilayer. Residues 192–197 (APKQIR) are Cytoplasmic-facing. A helical transmembrane segment spans residues 198–218 (GTLVQLYQLMCTMGIFLGYCT). The Extracellular portion of the chain corresponds to 219-232 (NYGTKNYHNATQWR). N227 carries an N-linked (GlcNAc...) asparagine glycan. Residues 233-253 (VGLGLCFAWTTFMVSGMMFVP) traverse the membrane as a helical segment. The Cytoplasmic portion of the chain corresponds to 254-336 (ESPRYLIEVG…IQSLQQLTGD (83 aa)). A helical transmembrane segment spans residues 337 to 353 (NYFFYYGTTIFKSVGLK). Topologically, residues 354-359 (DSFQTS) are extracellular. The helical transmembrane segment at 360-377 (IIIGVVNFFSSFIAVYTI) threads the bilayer. Over 378–384 (ERFGRRT) the chain is Cytoplasmic. The chain crosses the membrane as a helical span at residues 385-405 (CLLWGAASMLCCFAVFASVGV). The Extracellular portion of the chain corresponds to 406-429 (TKLWPQGSSHQDITSQGAGNCMIV). Residues 430–450 (FTMFFIFSFATTWAGGCYVIV) traverse the membrane as a helical segment. The Cytoplasmic segment spans residues 451–467 (SETFPLRVKSRGMAIAT). A helical transmembrane segment spans residues 468–488 (AANWMWGFLISFFTPFITGAI). Residue N489 is a topological domain, extracellular. The helical transmembrane segment at 490–510 (FYYGYVFLGCLVFAYFYVFFF) threads the bilayer. Over 511 to 567 (VPETKGLTLEEVNTMWLEGVPAWKSASWVPPERRTADYDADAIDHDDRPIYKRFFSS) the chain is Cytoplasmic.

The protein belongs to the major facilitator superfamily. Sugar transporter (TC 2.A.1.1) family.

Its subcellular location is the membrane. Probable glucose transporter. The protein is Hexose transporter HXT9 (HXT9) of Saccharomyces cerevisiae (strain ATCC 204508 / S288c) (Baker's yeast).